The following is a 495-amino-acid chain: Bile acid-sensitive ion channel (495 aa).

Residues Met-1–Ser-30 are binds the plasma membrane and stabilizes the channel in the closed state. Topologically, residues Met-1 to Arg-61 are cytoplasmic. The helical transmembrane segment at Lys-62–Ser-82 threads the bilayer. Topologically, residues Arg-83–Thr-459 are extracellular. 6 cysteine pairs are disulfide-bonded: Cys-112–Cys-207, Cys-185–Cys-192, Cys-298–Cys-377, Cys-315–Cys-373, Cys-328–Cys-350, and Cys-330–Cys-342. N-linked (GlcNAc...) asparagine glycans are attached at residues Asn-147 and Asn-163. N-linked (GlcNAc...) asparagine glycosylation is present at Asn-306. N-linked (GlcNAc...) asparagine glycans are attached at residues Asn-370, Asn-405, and Asn-421. The short motif at Gly-454–Ser-456 is the GAS motif; ion selectivity filter element. Residues Ile-460–Leu-480 form a helical membrane-spanning segment. At Lys-481–Val-495 the chain is on the cytoplasmic side.

It belongs to the amiloride-sensitive sodium channel (TC 1.A.6) family. ASIC5 subfamily. Forms homotrimeric channels. As to expression, expressed by cholangiocytes (at protein level). Detected in brain, liver, duodenum, jejunum, ileum and testis.

It is found in the apical cell membrane. The protein localises to the cell membrane. The catalysed reaction is Na(+)(in) = Na(+)(out). The enzyme catalyses Li(+)(in) = Li(+)(out). It carries out the reaction K(+)(in) = K(+)(out). It catalyses the reaction H(+)(in) = H(+)(out). Its activity is regulated as follows. Inhibited by the diuretic drug amiloride. Inhibited by diminazene. Inhibited by extracellular Ca(2+). Functionally, forms bile acid-gated sodium channels and may play a role in bile acid-dependent absorption and secretion by epithelial cells of the bile ducts. Displays high selectivity for sodium ions but can also permit the permeation of other cations. The gating could be indirect and the consequence of alterations of the membrane environment of the channel by bile acids. As a sodium channel of type II unipolar brush cells of the vestibulocerebellum, controlling the electrical activity of these cells, could play a role in motor coordination and balance. The protein is Bile acid-sensitive ion channel of Rattus norvegicus (Rat).